The chain runs to 271 residues: NADPH-dependent 7-cyano-7-deazaguanine reductase (271 aa).

81–83 (IES) serves as a coordination point for substrate. NADPH is bound at residue 83-84 (SK). Cys177 (thioimide intermediate) is an active-site residue. Asp184 serves as the catalytic Proton donor. Substrate is bound at residue 216–217 (HE). 245 to 246 (RG) is an NADPH binding site.

This sequence belongs to the GTP cyclohydrolase I family. QueF type 2 subfamily. Homodimer.

It is found in the cytoplasm. The enzyme catalyses 7-aminomethyl-7-carbaguanine + 2 NADP(+) = 7-cyano-7-deazaguanine + 2 NADPH + 3 H(+). It functions in the pathway tRNA modification; tRNA-queuosine biosynthesis. Its function is as follows. Catalyzes the NADPH-dependent reduction of 7-cyano-7-deazaguanine (preQ0) to 7-aminomethyl-7-deazaguanine (preQ1). The chain is NADPH-dependent 7-cyano-7-deazaguanine reductase from Xanthomonas oryzae pv. oryzae (strain MAFF 311018).